The following is a 92-amino-acid chain: Probable Fe(2+)-trafficking protein (92 aa).

This sequence belongs to the Fe(2+)-trafficking protein family.

In terms of biological role, could be a mediator in iron transactions between iron acquisition and iron-requiring processes, such as synthesis and/or repair of Fe-S clusters in biosynthetic enzymes. This Shewanella sp. (strain ANA-3) protein is Probable Fe(2+)-trafficking protein.